The primary structure comprises 183 residues: Ribosome rescue factor SmrB (183 aa).

The region spanning 98–173 is the Smr domain; the sequence is LDLHGLTQLQ…GDAALLVLIE (76 aa).

This sequence belongs to the SmrB family. Associates with collided ribosomes, but not with correctly translating polysomes.

Its function is as follows. Acts as a ribosome collision sensor. Detects stalled/collided disomes (pairs of ribosomes where the leading ribosome is stalled and a second ribosome has collided with it) and endonucleolytically cleaves mRNA at the 5' boundary of the stalled ribosome. Stalled/collided disomes form a new interface (primarily via the 30S subunits) that binds SmrB. Cleaved mRNA becomes available for tmRNA ligation, leading to ribosomal subunit dissociation and rescue of stalled ribosomes. This Salmonella arizonae (strain ATCC BAA-731 / CDC346-86 / RSK2980) protein is Ribosome rescue factor SmrB.